Reading from the N-terminus, the 423-residue chain is Probable peptidoglycan glycosyltransferase FtsW (423 aa).

At 1–53 (MNLKEKLFPENRLGLNRFWNFSRGGIDNFRTGLRDAVSGVEQTRSRMMEYDQL) the chain is on the cytoplasmic side. Residues 54-74 (LVWAILSLMLIGLVMVYSASI) form a helical membrane-spanning segment. The Periplasmic segment spans residues 75-88 (TLADGPKYANYSSN). Residues 89–109 (FFLIRHMISLAIAIGVGIWAF) form a helical membrane-spanning segment. Residues 110 to 119 (KIPTKVWDRY) are Cytoplasmic-facing. Residues 120 to 140 (SPVIFGITVLLLIAVLIPGVG) traverse the membrane as a helical segment. The Periplasmic portion of the chain corresponds to 141 to 149 (RGVNGAKRW). A helical transmembrane segment spans residues 150-170 (IPLGLMNFQSSELMKFAAVIF). At 171–184 (AASYTVQRQEYLHS) the chain is on the cytoplasmic side. The helical transmembrane segment at 185–205 (FVKGMLPMGIAVALVGGLLMA) threads the bilayer. Residues 206–208 (EPD) are Periplasmic-facing. The helical transmembrane segment at 209 to 229 (MGAFVVVALIAFGILFLGGIN) threads the bilayer. Residues 230–231 (AK) lie on the Cytoplasmic side of the membrane. Residues 232–252 (LFGGLIAVGLMSGATMIAFSP) traverse the membrane as a helical segment. Topologically, residues 253–310 (LRRGRMLAFMDPWQVDNAANKGYQLTHSLMAFGRGEWFGTGLGGSVEKLHYLPEAHTD) are periplasmic. The chain crosses the membrane as a helical span at residues 311–331 (FIMAVIGEELGFVGVVVMIFL). The Cytoplasmic segment spans residues 332-359 (FYWIVRRAFLIGRTALQLDRSFAGLAAK). Residues 360-380 (GVAIWIGWQAFINMGVNLGLL) form a helical membrane-spanning segment. The Periplasmic portion of the chain corresponds to 381 to 386 (PTKGLT). A helical membrane pass occupies residues 387–407 (LPLVSYGGSGILMNAVAMAML). At 408 to 423 (LRIDFENRILMRGGKL) the chain is on the cytoplasmic side.

This sequence belongs to the SEDS family. FtsW subfamily.

Its subcellular location is the cell inner membrane. It carries out the reaction [GlcNAc-(1-&gt;4)-Mur2Ac(oyl-L-Ala-gamma-D-Glu-L-Lys-D-Ala-D-Ala)](n)-di-trans,octa-cis-undecaprenyl diphosphate + beta-D-GlcNAc-(1-&gt;4)-Mur2Ac(oyl-L-Ala-gamma-D-Glu-L-Lys-D-Ala-D-Ala)-di-trans,octa-cis-undecaprenyl diphosphate = [GlcNAc-(1-&gt;4)-Mur2Ac(oyl-L-Ala-gamma-D-Glu-L-Lys-D-Ala-D-Ala)](n+1)-di-trans,octa-cis-undecaprenyl diphosphate + di-trans,octa-cis-undecaprenyl diphosphate + H(+). The protein operates within cell wall biogenesis; peptidoglycan biosynthesis. Functionally, peptidoglycan polymerase that is essential for cell division. The chain is Probable peptidoglycan glycosyltransferase FtsW from Polynucleobacter necessarius subsp. necessarius (strain STIR1).